Here is a 139-residue protein sequence, read N- to C-terminus: Putative pre-16S rRNA nuclease (139 aa).

It belongs to the YqgF nuclease family.

It is found in the cytoplasm. In terms of biological role, could be a nuclease involved in processing of the 5'-end of pre-16S rRNA. This chain is Putative pre-16S rRNA nuclease, found in Streptococcus agalactiae serotype Ia (strain ATCC 27591 / A909 / CDC SS700).